Here is a 792-residue protein sequence, read N- to C-terminus: MAKQSSRELALERRKALSNSGKKSTTLNGSSPNRIRTASDARLTRTDQSFVKAGKESVQLTAPKREQLDTSFVASRESSGASRRQVKTIRNSSRELVLARRDELSRRGQPAAKSKDRTRAEVEKISSKVSQQDAAKKQVNDLASDQKGVDESSSKSLKSLDTVSRLSSRNSTSRPSAKRRSIQNPSRALVLARREAQSKHGKTAANQPTSAASVARQGDPDLSSREISQRVRELRSKSGATGKKRSGACRPCGPNRNGSKQAVAADAHWKVGLSETSTGQVVTGTQANRSSKTTGNEASTCRSITGTQYLGSEVFDTFCQSAPQPGQPLKVAVTNTSHGNRVTGNEVGRSEKVTGDEPGTCKTLTGTEYISANQANQYCGVSQPSPRKVGQSVTEDGRKVSGVMVGRSEKVTGDEAGSNRQLTGDQYLGVDPLPEGRSAEKVGSFNTLRGAGVTGTNVARSEYVTGNEPGSCKRVTGDEYVGPQQYNTFCGGKPNPEAAKVGLSLTNKSQTVSGTLTGRSELVTGDEPGTCKAVTGTPYSGVEQASGWCDTNSVREIQDRTPKLLGTPGAVMTGLQPGVGGVMTGAEKGACEPLTGTPYVGGDQLVQACGSDAPAGSNDHQGSSESSPWTHFSVQSPARAMQLQRDPRSGVTGTSYEQGSQITGPFNMAVDKITGTEQFRFDRKQRHFKSVPVEATPNDVSQTRPESRVTGEGQSAGLNITGDDWDRSERVTGTEGASARRRNPTRPGPMSAMPAADLKRNEEVSQPMSRVTGSSGNTDQGSLITVSGGARG.

The segment covering 1–15 (MAKQSSRELALERRK) has biased composition (basic and acidic residues). Positions 1-235 (MAKQSSRELA…EISQRVRELR (235 aa)) are N-terminal domain. 3 disordered regions span residues 1-259 (MAKQ…RNGS), 280-299 (QVVTGTQANRSSKTTGNEAS), and 338-359 (HGNRVTGNEVGRSEKVTGDEPG). The stretch at 7–22 (RELALERRKALSNSGK) is one N-repeat 1 repeat. 2 stretches are compositionally biased toward polar residues: residues 17 to 36 (LSNSGKKSTTLNGSSPNRIR) and 69 to 82 (DTSFVASRESSGAS). The stretch at 94–109 (RELVLARRDELSRRGQ) is one N-repeat 2 repeat. Composition is skewed to basic and acidic residues over residues 97-106 (VLARRDELSR) and 113-126 (KSKDRTRAEVEKIS). The span at 161-175 (DTVSRLSSRNSTSRP) shows a compositional bias: polar residues. N-repeat repeat units follow at residues 187 to 202 (RALVLARREAQSKHGK) and 225 to 240 (REISQRVRELRSKSGA). The span at 218–236 (GDPDLSSREISQRVRELRS) shows a compositional bias: basic and acidic residues. A middle region region spans residues 240–615 (ATGKKRSGAC…VQACGSDAPA (376 aa)). M-repeat repeat units lie at residues 270–319 (KVGL…DTFC), 330–379 (KVAV…NQYC), 388–427 (KVGQSVTEDGRKVSGVMVGRSEKVTGDEAGSNRQLTGDQY), 441–490 (KVGS…NTFC), 500–549 (KVGL…SGWC), and 560–609 (RTPK…VQAC). Disordered stretches follow at residues 608–662 (ACGS…GSQI) and 687–792 (HFKS…GARG). The segment at 616–792 (GSNDHQGSSE…LITVSGGARG (177 aa)) is C-terminal domain. 2 stretches are compositionally biased toward polar residues: residues 618 to 636 (NDHQGSSESSPWTHFSVQS) and 651 to 662 (VTGTSYEQGSQI). 2 C-repeat repeats span residues 633–678 (SVQS…GTEQ) and 703–738 (TRPESRVTGEGQSAGLNITGDDWDRSERVTGTEGAS). The segment at 763–792 (EVSQPMSRVTGSSGNTDQGSLITVSGGARG) is C-terminal peptide (CTP). Residues 764–785 (VSQPMSRVTGSSGNTDQGSLIT) show a composition bias toward polar residues.

This sequence belongs to the CsoS2 family. In terms of assembly, probably interacts with the carboxysome major shell protein CsoS1 via the N-terminal domain; this complex probably also interacts with RuBisCO. In terms of processing, has been suggested to undergo ribosomal frameshifting, as does its ortholog in H.neapolitanus. The exact position of the putative frameshift is not given, but it would probably occur in the sixth M-repeat and remove the C-terminus.

Its subcellular location is the carboxysome. In terms of biological role, required for alpha-carboxysome (Cb) assembly, mediates interaction between RuBisCO and the Cb shell. The protein is probably intrinsically disordered. The C-terminal repeats act as the encapsulation signal to target proteins to the Cb; they are necessary and sufficient to target both CsoS2 and foreign proteins to the Cb. The N-terminal repeats of this protein bind simultaneously to both subunits of RuBisCO. Probably also interacts with the major shell proteins (CsoS1); that interaction would increase the local concentration of CsoS2 so that it can condense RuBisCO and full carboxysomes can be formed. The polypeptide is Carboxysome assembly protein CsoS2 (Prochlorococcus marinus (strain MIT 9313)).